The following is a 432-amino-acid chain: MRVLVLGSGVIGTASAYYLARAGFEVVVVDRQDGPALETSFANAGQVSPGYASPWAAPGIPLKAMKWLLEKHAPLAIKLTSDPSQYAWMLQMLRNCTAERYAVNKERMVRLSEYSRDCLDELRAETGIAYEGRTLGTTQLFRTQAQLDAAGKDIAVLERSGVPYEVLDRDGIARVEPALAKVADKLVGALRLPNDQTGDCQLFTTRLAEMAKGLGVEFRFGQNIERLDFAGDRINGVLVNGELLTADHYVLALGSYSPQLLKPLGIKAPVYPLKGYSLTVPITNPEMAPTSTILDETYKVAITRFDQRIRVGGMAEIAGFDLSLNPRRRETLEMITTDLYPEGGDISQATFWTGLRPATPDGTPIVGATRYRNLFLNTGHGTLGWTMACGSGRYLADLMAKKRPQISTEGLDISRYSNSPENAKNAHPAPAH.

3-17 (VLVLGSGVIGTASAY) contributes to the FAD binding site. The interval 410–432 (GLDISRYSNSPENAKNAHPAPAH) is disordered.

The protein belongs to the DadA oxidoreductase family. FAD serves as cofactor.

It catalyses the reaction a D-alpha-amino acid + A + H2O = a 2-oxocarboxylate + AH2 + NH4(+). The protein operates within amino-acid degradation; D-alanine degradation; NH(3) and pyruvate from D-alanine: step 1/1. Catalyzes the oxidative deamination of D-amino acids. Has very broad substrate specificity; all the D-amino acids tested can be used as the substrate except D-Glu and D-Gln. Participates in the utilization of several D-amino acids as the sole source of nitrogen, i.e. D-alanine, D-histidine, D-phenylalanine, D-serine, D-threonine, and D-valine. This Pseudomonas aeruginosa (strain ATCC 15692 / DSM 22644 / CIP 104116 / JCM 14847 / LMG 12228 / 1C / PRS 101 / PAO1) protein is D-amino acid dehydrogenase 1 (dadA1).